The following is a 196-amino-acid chain: Molybdenum cofactor guanylyltransferase (196 aa).

GTP-binding positions include 12-14 (LAG), lysine 25, asparagine 53, aspartate 71, and aspartate 101. A Mg(2+)-binding site is contributed by aspartate 101.

Belongs to the MobA family. As to quaternary structure, monomer. Mg(2+) is required as a cofactor.

It is found in the cytoplasm. It carries out the reaction Mo-molybdopterin + GTP + H(+) = Mo-molybdopterin guanine dinucleotide + diphosphate. Functionally, transfers a GMP moiety from GTP to Mo-molybdopterin (Mo-MPT) cofactor (Moco or molybdenum cofactor) to form Mo-molybdopterin guanine dinucleotide (Mo-MGD) cofactor. This Bordetella petrii (strain ATCC BAA-461 / DSM 12804 / CCUG 43448) protein is Molybdenum cofactor guanylyltransferase.